The following is a 502-amino-acid chain: Bone morphogenetic protein receptor type-1B (502 aa).

An N-terminal signal peptide occupies residues 1 to 13; that stretch reads MLLRSAGKLNVGT. Residues 1–25 form a disordered region; sequence MLLRSAGKLNVGTKKEDGESTAPTP. Residues 14–126 lie on the Extracellular side of the membrane; sequence KKEDGESTAP…DFVDGPIHHR (113 aa). Disulfide bonds link C32/C53, C34/C38, C47/C71, C81/C95, and C96/C102. Residues 127–148 form a helical membrane-spanning segment; it reads ALLISVTVCSLLLVLIILFCYF. At 149 to 502 the chain is on the cytoplasmic side; it reads RYKRQETRPR…KMSESQDIKL (354 aa). The GS domain maps to 174–203; that stretch reads ESLRDLIEQSQSSGSGSGLPLLVQRTIAKQ. Residues 204–494 enclose the Protein kinase domain; sequence IQMVKQIGKG…LRVKKTLAKM (291 aa). ATP contacts are provided by residues 210 to 218 and K231; that span reads IGKGRYGEV. D332 acts as the Proton acceptor in catalysis.

The protein belongs to the protein kinase superfamily. TKL Ser/Thr protein kinase family. TGFB receptor subfamily. Interacts with high affinity with GDF5; positively regulates chondrocyte differentiation. Interacts with SCUBE3. Interacts with TSC22D1/TSC-22. Interacts with TGFBR3. Mg(2+) serves as cofactor. The cofactor is Mn(2+). Autophosphorylated.

Its subcellular location is the cell membrane. The enzyme catalyses L-threonyl-[receptor-protein] + ATP = O-phospho-L-threonyl-[receptor-protein] + ADP + H(+). The catalysed reaction is L-seryl-[receptor-protein] + ATP = O-phospho-L-seryl-[receptor-protein] + ADP + H(+). Functionally, on ligand binding, forms a receptor complex consisting of two type II and two type I transmembrane serine/threonine kinases. Type II receptors phosphorylate and activate type I receptors which autophosphorylate, then bind and activate SMAD transcriptional regulators. Receptor for BMP7/OP-1 and GDF5. Positively regulates chondrocyte differentiation through GDF5 interaction. The polypeptide is Bone morphogenetic protein receptor type-1B (BMPR1B) (Homo sapiens (Human)).